A 202-amino-acid polypeptide reads, in one-letter code: NADH-quinone oxidoreductase subunit C (202 aa).

The protein belongs to the complex I 30 kDa subunit family. As to quaternary structure, NDH-1 is composed of 14 different subunits. Subunits NuoB, C, D, E, F, and G constitute the peripheral sector of the complex.

Its subcellular location is the cell inner membrane. It catalyses the reaction a quinone + NADH + 5 H(+)(in) = a quinol + NAD(+) + 4 H(+)(out). Functionally, NDH-1 shuttles electrons from NADH, via FMN and iron-sulfur (Fe-S) centers, to quinones in the respiratory chain. The immediate electron acceptor for the enzyme in this species is believed to be ubiquinone. Couples the redox reaction to proton translocation (for every two electrons transferred, four hydrogen ions are translocated across the cytoplasmic membrane), and thus conserves the redox energy in a proton gradient. This Brucella abortus (strain 2308) protein is NADH-quinone oxidoreductase subunit C.